The sequence spans 487 residues: Inosine-5'-monophosphate dehydrogenase (487 aa).

CBS domains follow at residues 93-149 and 153-214; these read IVSD…NKTV and MTPK…CKDE. NAD(+) contacts are provided by residues D248, 248–250, and 298–300; these read DSS and GIG. 2 residues coordinate K(+): G300 and G302. S303 is a binding site for IMP. C305 lines the K(+) pocket. C305 serves as the catalytic Thioimidate intermediate. IMP is bound by residues 338–340, 361–362, and 385–389; these read DGG, GS, and YRGMG. R401 (proton acceptor) is an active-site residue. Residue E415 participates in IMP binding. K(+) is bound by residues E469, S470, and H471.

Belongs to the IMPDH/GMPR family. As to quaternary structure, homotetramer. Requires K(+) as cofactor.

It carries out the reaction IMP + NAD(+) + H2O = XMP + NADH + H(+). The protein operates within purine metabolism; XMP biosynthesis via de novo pathway; XMP from IMP: step 1/1. With respect to regulation, mycophenolic acid (MPA) is a non-competitive inhibitor that prevents formation of the closed enzyme conformation by binding to the same site as the amobile flap. In contrast, mizoribine monophosphate (MZP) is a competitive inhibitor that induces the closed conformation. MPA is a potent inhibitor of mammalian IMPDHs but a poor inhibitor of the bacterial enzymes. MZP is a more potent inhibitor of bacterial IMPDH. Functionally, catalyzes the conversion of inosine 5'-phosphate (IMP) to xanthosine 5'-phosphate (XMP), the first committed and rate-limiting step in the de novo synthesis of guanine nucleotides, and therefore plays an important role in the regulation of cell growth. In Pasteurella multocida (strain Pm70), this protein is Inosine-5'-monophosphate dehydrogenase.